Consider the following 256-residue polypeptide: Hypodermin-B (256 aa).

An N-terminal signal peptide occupies residues 1–22; the sequence is MLKFVILVCSVACVFGAVVPGG. Positions 23 to 30 are cleaved as a propeptide — activation peptide; that stretch reads MLPQLDGR. Residues 31-254 enclose the Peptidase S1 domain; it reads IVGGFEADIE…VRSWITENAK (224 aa). A disulfide bridge connects residues Cys-56 and Cys-72. Residues His-71 and Asp-116 each act as charge relay system in the active site. Disulfide bonds link Cys-180/Cys-197 and Cys-206/Cys-230. The active-site Charge relay system is Ser-210.

It belongs to the peptidase S1 family.

The protein resides in the secreted. In terms of biological role, protease that shows preferential cleavage after Arg and Lys residues. The chain is Hypodermin-B from Hypoderma lineatum (Early cattle grub).